We begin with the raw amino-acid sequence, 211 residues long: Uracil phosphoribosyltransferase (211 aa).

5-phospho-alpha-D-ribose 1-diphosphate is bound by residues Arg77, Arg102, and 129–137 (DPMLATGGS). Residues Ile192 and 197–199 (GDA) contribute to the uracil site. 5-phospho-alpha-D-ribose 1-diphosphate is bound at residue Asp198.

This sequence belongs to the UPRTase family. Requires Mg(2+) as cofactor.

The catalysed reaction is UMP + diphosphate = 5-phospho-alpha-D-ribose 1-diphosphate + uracil. It functions in the pathway pyrimidine metabolism; UMP biosynthesis via salvage pathway; UMP from uracil: step 1/1. Its activity is regulated as follows. Allosterically activated by GTP. Functionally, catalyzes the conversion of uracil and 5-phospho-alpha-D-ribose 1-diphosphate (PRPP) to UMP and diphosphate. The sequence is that of Uracil phosphoribosyltransferase from Corynebacterium aurimucosum (strain ATCC 700975 / DSM 44827 / CIP 107346 / CN-1) (Corynebacterium nigricans).